A 165-amino-acid polypeptide reads, in one-letter code: MASTYSFDVVSDFDRQELVNTLDQVRRDVGNRYDLKDSNTEIDLEETELVITTASDMTLQAVEDVLRTKATKRNLSLKIFDFQTPETAGGNRVRQVVKLRKGLSQEIAKKLSKMVRDELKKVTVAIQGESVRITGKSKDDLQAAIQLVKGKEDELDVPLQFENYR.

The protein belongs to the YajQ family.

Nucleotide-binding protein. This is Nucleotide-binding protein Syncc9605_0652 from Synechococcus sp. (strain CC9605).